The following is a 351-amino-acid chain: Translation initiation factor eIF2B subunit beta (351 aa).

The protein belongs to the eIF-2B alpha/beta/delta subunits family. As to quaternary structure, component of the translation initiation factor 2B (eIF2B) complex which is a heterodecamer of two sets of five different subunits: alpha, beta, gamma, delta and epsilon. Subunits alpha, beta and delta comprise a regulatory subcomplex and subunits epsilon and gamma comprise a catalytic subcomplex. Within the complex, the hexameric regulatory complex resides at the center, with the two heterodimeric catalytic subcomplexes bound on opposite sides.

The protein resides in the cytoplasm. The protein localises to the cytosol. Its activity is regulated as follows. Activated by the chemical integrated stress response (ISR) inhibitor ISRIB which stimulates guanine nucleotide exchange factor activity for both phosphorylated and unphosphorylated eIF2. In terms of biological role, acts as a component of the translation initiation factor 2B (eIF2B) complex, which catalyzes the exchange of GDP for GTP on eukaryotic initiation factor 2 (eIF2) gamma subunit. Its guanine nucleotide exchange factor activity is repressed when bound to eIF2 complex phosphorylated on the alpha subunit, thereby limiting the amount of methionyl-initiator methionine tRNA available to the ribosome and consequently global translation is repressed. The chain is Translation initiation factor eIF2B subunit beta (Eif2b2) from Rattus norvegicus (Rat).